Consider the following 97-residue polypeptide: Acylphosphatase-2 (97 aa).

Alanine 2 bears the N-acetylalanine mark. An Acylphosphatase-like domain is found at 7–97 (SVDYEVFGTV…LEYSNFSIRY (91 aa)). Catalysis depends on residues arginine 22 and asparagine 40. Serine 91 is subject to Phosphoserine.

Belongs to the acylphosphatase family.

It catalyses the reaction an acyl phosphate + H2O = a carboxylate + phosphate + H(+). Functionally, its physiological role is not yet clear. This chain is Acylphosphatase-2 (Acyp2), found in Rattus norvegicus (Rat).